A 639-amino-acid chain; its full sequence is CTTNBP2 N-terminal-like protein (639 aa).

Residues 87-285 adopt a coiled-coil conformation; that stretch reads MKQCKNMQER…DLEASHQHSS (199 aa). Residues S284 and S285 each carry the phosphoserine modification. Disordered stretches follow at residues 387-430, 463-490, and 511-609; these read VENG…PCSS, RHKF…LSPT, and RFTS…AASL. Composition is skewed to low complexity over residues 405-430 and 467-477; these read PLSS…PCSS and QSQADQDQQAS. Residues S481, S488, S523, S527, S560, S563, and S568 each carry the phosphoserine modification. Over residues 511–529 the composition is skewed to polar residues; sequence RFTSQQGPIKPVSPNSSPF. Phosphothreonine is present on residues T570 and T590. Residues 587–600 show a composition bias toward low complexity; that stretch reads PGLTPSPSATTPLT. S592 bears the Phosphoserine mark.

As to quaternary structure, interacts with CTTN/cortactin; this interaction may redistribute CTTN to stress fibers. May form homomers. Associates with the core of STRIPAK complexes composed of PP2A catalytic and scaffolding subunits, the striatins (PP2A regulatory subunits), the striatin-associated proteins MOB4, STRIP1 and STRIP2, PDCD10 and members of the STE20 kinases, such as STK24 and STK26.

It is found in the cell projection. Its subcellular location is the lamellipodium. The protein localises to the cytoplasm. It localises to the cytoskeleton. The protein resides in the stress fiber. Regulates lamellipodial actin dynamics in a CTTN-dependent manner. Associates with core striatin-interacting phosphatase and kinase (STRIPAK) complex to form CTTNBP2NL-STRIPAK complexes. STRIPAK complexes have critical roles in protein (de)phosphorylation and are regulators of multiple signaling pathways including Hippo, MAPK, nuclear receptor and cytoskeleton remodeling. Different types of STRIPAK complexes are involved in a variety of biological processes such as cell growth, differentiation, apoptosis, metabolism and immune regulation. This is CTTNBP2 N-terminal-like protein from Homo sapiens (Human).